A 288-amino-acid polypeptide reads, in one-letter code: Transformer-2 protein homolog beta (288 aa).

Disordered stretches follow at residues methionine 1–proline 114 and threonine 196–glycine 225. An N-acetylserine modification is found at serine 2. Residues serine 2, serine 4, and serine 14 each carry the phosphoserine modification. Residues alanine 17–lysine 28 are compositionally biased toward low complexity. Serine 29 carries the phosphoserine modification. A Phosphothreonine modification is found at threonine 33. Residues arginine 59–glycine 109 show a composition bias toward basic residues. Phosphoserine is present on residues serine 83, serine 85, serine 87, serine 95, serine 97, and serine 99. A Phosphothreonine modification is found at threonine 103. Positions cysteine 118–threonine 196 constitute an RRM domain. Residues phenylalanine 193–tyrosine 230 form a linker region. Residue lysine 197 forms a Glycyl lysine isopeptide (Lys-Gly) (interchain with G-Cter in SUMO2) linkage. Threonine 201 and threonine 203 each carry phosphothreonine. Phosphoserine occurs at positions 215 and 237. The residue at position 241 (arginine 241) is an Asymmetric dimethylarginine; alternate. Dimethylated arginine; alternate is present on arginine 241. Arginine 241 carries the post-translational modification Omega-N-methylarginine; alternate. The interval glycine 242–tyrosine 288 is disordered. A compositionally biased stretch (basic residues) spans tyrosine 274–tyrosine 288.

The protein belongs to the splicing factor SR family. Found in a pre-mRNA exonic splicing enhancer (ESE) complex with TRA2B/SFRS10, SNRNP70, SNRPA1 and SRRM1. Binds to A3 enhancer proteins SFRS4, SFRS5, SFRS6 and SFRS9. Interacts with CPSF6, RBMY1A1, RBMX, RNPS1 and phosphorylated SFRS13A. Interacts with SAFB/SAFB1. Interacts with ILDR1 (via C-terminus) and ILDR2. Phosphorylated in the RS domains.

Its subcellular location is the nucleus. Its function is as follows. Sequence-specific RNA-binding protein which participates in the control of pre-mRNA splicing. Can either activate or suppress exon inclusion. Acts additively with RBMX to promote exon 7 inclusion of the survival motor neuron SMN2. Activates the splicing of MAPT/Tau exon 10. Alters pre-mRNA splicing patterns by antagonizing the effects of splicing regulators, like RBMX. Binds to the AG-rich SE2 domain in the SMN exon 7 RNA. Binds to pre-mRNA. This Bos taurus (Bovine) protein is Transformer-2 protein homolog beta (TRA2B).